The sequence spans 414 residues: ORC1-type DNA replication protein 11 (414 aa).

ATP-binding positions include 60–64 (VGKTA), Y207, and R219.

Belongs to the CDC6/cdc18 family.

In terms of biological role, involved in regulation of DNA replication. This Haloarcula marismortui (strain ATCC 43049 / DSM 3752 / JCM 8966 / VKM B-1809) (Halobacterium marismortui) protein is ORC1-type DNA replication protein 11 (cdc6k).